A 114-amino-acid chain; its full sequence is Protein LLP homolog (114 aa).

2 stretches are compositionally biased toward basic residues: residues 1–21 (MAKS…RKKN) and 91–108 (QRKK…KSKL). 2 disordered regions span residues 1-23 (MAKS…KNAP) and 91-114 (QRKK…GLAW).

This sequence belongs to the learning-associated protein family.

Its subcellular location is the nucleus. It localises to the nucleolus. The protein resides in the chromosome. Its function is as follows. Regulates dendritic and spine growth and synaptic transmission. This is Protein LLP homolog (LLPH) from Gallus gallus (Chicken).